A 340-amino-acid polypeptide reads, in one-letter code: Methionine import ATP-binding protein MetN 1 (340 aa).

One can recognise an ABC transporter domain in the interval 2-242 (IRLENVSVDF…PQHAYTKQLV (241 aa)). 39–46 (GTSGAGKS) lines the ATP pocket.

This sequence belongs to the ABC transporter superfamily. Methionine importer (TC 3.A.1.24) family. The complex is composed of two ATP-binding proteins (MetN), two transmembrane proteins (MetI) and a solute-binding protein (MetQ).

It localises to the cell inner membrane. The enzyme catalyses L-methionine(out) + ATP + H2O = L-methionine(in) + ADP + phosphate + H(+). The catalysed reaction is D-methionine(out) + ATP + H2O = D-methionine(in) + ADP + phosphate + H(+). Functionally, part of the ABC transporter complex MetNIQ involved in methionine import. Responsible for energy coupling to the transport system. The protein is Methionine import ATP-binding protein MetN 1 of Pectobacterium atrosepticum (strain SCRI 1043 / ATCC BAA-672) (Erwinia carotovora subsp. atroseptica).